The following is a 210-amino-acid chain: MITTSMTRTSALDTDMLGMVPMVIEQSGRGERAYDIYSRLLKERIIFLVGPVNDQMANLIVAQLLFLESENPDKDISLYINSPGGSVSAGMAIYDTMQFIKPNVSTLCTGLAASMGAFLLAAGEKGKRFSLPNSRIMIHQPLGGAQGQASDIEIQAREILYLRERLNAILAERTGKSVEEIAKDTDRDNFMSADAAVTYGMIDKVLATRA.

Residue serine 114 is the Nucleophile of the active site. The active site involves histidine 139.

Belongs to the peptidase S14 family. In terms of assembly, fourteen ClpP subunits assemble into 2 heptameric rings which stack back to back to give a disk-like structure with a central cavity, resembling the structure of eukaryotic proteasomes.

The protein resides in the cytoplasm. It carries out the reaction Hydrolysis of proteins to small peptides in the presence of ATP and magnesium. alpha-casein is the usual test substrate. In the absence of ATP, only oligopeptides shorter than five residues are hydrolyzed (such as succinyl-Leu-Tyr-|-NHMec, and Leu-Tyr-Leu-|-Tyr-Trp, in which cleavage of the -Tyr-|-Leu- and -Tyr-|-Trp bonds also occurs).. Its function is as follows. Cleaves peptides in various proteins in a process that requires ATP hydrolysis. Has a chymotrypsin-like activity. Plays a major role in the degradation of misfolded proteins. The protein is ATP-dependent Clp protease proteolytic subunit of Janthinobacterium sp. (strain Marseille) (Minibacterium massiliensis).